The primary structure comprises 447 residues: GTPase Der (447 aa).

EngA-type G domains are found at residues 3–167 (PVIA…FAER) and 181–354 (TRIA…AAAM). Residues 9–16 (GRPNVGKS), 56–60 (DTGGF), 119–122 (NKAE), 187–194 (GRPNVGKS), 234–238 (DTAGL), and 299–302 (NKWD) each bind GTP. In terms of domain architecture, KH-like spans 355–439 (VKLPTPKLTR…PLRIEFRTNK (85 aa)).

This sequence belongs to the TRAFAC class TrmE-Era-EngA-EngB-Septin-like GTPase superfamily. EngA (Der) GTPase family. Associates with the 50S ribosomal subunit.

In terms of biological role, GTPase that plays an essential role in the late steps of ribosome biogenesis. This is GTPase Der from Ralstonia nicotianae (strain ATCC BAA-1114 / GMI1000) (Ralstonia solanacearum).